We begin with the raw amino-acid sequence, 666 residues long: Amyloid beta A4 precursor protein-binding family B member 1-interacting protein (666 aa).

Residue S55 is modified to Phosphoserine. Residues 122–155 form a disordered region; it reads SQYEDDLPPPPADPVLDLPLPPPPPEPLSQEEEE. A compositionally biased stretch (pro residues) spans 129 to 148; the sequence is PPPPADPVLDLPLPPPPPEP. The region spanning 176-263 is the Ras-associating domain; sequence KKLVVKVHMN…KILFLEKEEK (88 aa). The 110-residue stretch at 310–419 folds into the PH domain; that stretch reads VPELEGALYL…WVMGIRIAKY (110 aa). The disordered stretch occupies residues 448–666; sequence AAAPAQPSTG…ALQKKRGNVS (219 aa). The span at 453 to 478 shows a compositional bias: polar residues; the sequence is QPSTGPKTGTTQPNGQIPQATHSVSA. A compositionally biased stretch (basic and acidic residues) spans 483-504; that stretch reads AQRHAETSKDKKPALGNHHDPA. S526 is modified (phosphoserine). T528 carries the phosphothreonine modification. Position 531 is a phosphoserine (S531). Pro residues-rich tracts occupy residues 547–589 and 598–631; these read PAPP…PPPS and LPPP…PVPP.

It belongs to the MRL family. In terms of assembly, interacts, through the N-terminal Pro-rich region, with the WW domain of APBB1. Interacts with RAP1A, PFN1, TLN1, VASP, VCL and ENAH. Widely expressed with high expression in thymus, spleen, lymph node, bone marrow and peripheral leukocytes.

Its subcellular location is the cell membrane. The protein localises to the cell projection. It is found in the lamellipodium. The protein resides in the cell junction. It localises to the focal adhesion. Its subcellular location is the cytoplasm. The protein localises to the cytoskeleton. Its function is as follows. Appears to function in the signal transduction from Ras activation to actin cytoskeletal remodeling. Suppresses insulin-induced promoter activities through AP1 and SRE. Mediates Rap1-induced adhesion. This Homo sapiens (Human) protein is Amyloid beta A4 precursor protein-binding family B member 1-interacting protein (APBB1IP).